We begin with the raw amino-acid sequence, 564 residues long: Potassium-transporting ATPase potassium-binding subunit (564 aa).

Helical transmembrane passes span 4–24 (YDYLLLLAFFAIVLLPAPWLG), 67–87 (TLALLAFNLAGFLLLFAVLLL), 135–155 (IGLTVQNFVSAATGLAVLVAL), 179–199 (LYGLLPLCLVLALLLVWQGVP), 258–278 (FEVASIILIPVALVFTFGHYV), 286–306 (AIIACMLALFLIGGSTALWSE), 382–402 (AGLYGMLLFVLIAVFLAGLMI), 420–440 (LLVATLLVMPVGVLILGAIAA), 487–507 (VMIGLAMLIGRFGYILPVLAL), and 534–554 (LLLLTILLVGGLTFLPTLALG).

This sequence belongs to the KdpA family. The system is composed of three essential subunits: KdpA, KdpB and KdpC.

Its subcellular location is the cell inner membrane. Part of the high-affinity ATP-driven potassium transport (or Kdp) system, which catalyzes the hydrolysis of ATP coupled with the electrogenic transport of potassium into the cytoplasm. This subunit binds the periplasmic potassium ions and delivers the ions to the membrane domain of KdpB through an intramembrane tunnel. This is Potassium-transporting ATPase potassium-binding subunit from Pseudomonas entomophila (strain L48).